We begin with the raw amino-acid sequence, 452 residues long: Pup--protein ligase (452 aa).

Glu9 serves as a coordination point for Mg(2+). Arg53 lines the ATP pocket. Residue Tyr55 coordinates Mg(2+). The active-site Proton acceptor is Asp57. Glu63 serves as a coordination point for Mg(2+). Residues Thr66 and Trp419 each coordinate ATP.

It belongs to the Pup ligase/Pup deamidase family. Pup-conjugating enzyme subfamily.

It catalyses the reaction ATP + [prokaryotic ubiquitin-like protein]-L-glutamate + [protein]-L-lysine = ADP + phosphate + N(6)-([prokaryotic ubiquitin-like protein]-gamma-L-glutamyl)-[protein]-L-lysine.. Its pathway is protein degradation; proteasomal Pup-dependent pathway. It participates in protein modification; protein pupylation. In terms of biological role, catalyzes the covalent attachment of the prokaryotic ubiquitin-like protein modifier Pup to the proteasomal substrate proteins, thereby targeting them for proteasomal degradation. This tagging system is termed pupylation. The ligation reaction involves the side-chain carboxylate of the C-terminal glutamate of Pup and the side-chain amino group of a substrate lysine. This chain is Pup--protein ligase, found in Mycobacterium leprae (strain Br4923).